The sequence spans 197 residues: MIIGITGGIASGKSTVVKVIRKAGYQVIDADQVVHDLQEKGGRLYEALREAFGNQILKADGELDRTKLSEMLFSNPDNMATSSAIQNQIIKEELAAKRDHLAQSQAIFFMDIPLLMELGYQDWFDAIWLVYVDAQTQLQRLMARNRLDKGKARQRIASQLPIEEKKPYASLVIDNNGDMETLIKQVQSALLSLANPR.

Positions 2-197 (IIGITGGIAS…SALLSLANPR (196 aa)) constitute a DPCK domain. 10–15 (ASGKST) is a binding site for ATP.

It belongs to the CoaE family.

It localises to the cytoplasm. It carries out the reaction 3'-dephospho-CoA + ATP = ADP + CoA + H(+). It functions in the pathway cofactor biosynthesis; coenzyme A biosynthesis; CoA from (R)-pantothenate: step 5/5. Catalyzes the phosphorylation of the 3'-hydroxyl group of dephosphocoenzyme A to form coenzyme A. The chain is Dephospho-CoA kinase from Streptococcus pyogenes serotype M3 (strain ATCC BAA-595 / MGAS315).